Here is a 317-residue protein sequence, read N- to C-terminus: Peptidyl-prolyl cis-trans isomerase CYP26-2, chloroplastic (317 aa).

The segment at 1 to 37 is disordered; the sequence is MMQPNAKLLSPSAKFLPSPIEPPQHNRRTTVGAPPSL. The PPIase cyclophilin-type domain maps to 95–311; the sequence is FIDVSIDGEP…SKVVVTNCGL (217 aa).

The protein belongs to the cyclophilin-type PPIase family. In terms of tissue distribution, ubiquitous. Lower levels of expression in roots.

The protein resides in the plastid. It is found in the chloroplast thylakoid. It catalyses the reaction [protein]-peptidylproline (omega=180) = [protein]-peptidylproline (omega=0). Its function is as follows. PPIases accelerate the folding of proteins. It catalyzes the cis-trans isomerization of proline imidic peptide bonds in oligopeptides. The chain is Peptidyl-prolyl cis-trans isomerase CYP26-2, chloroplastic (CYP26-2) from Arabidopsis thaliana (Mouse-ear cress).